Here is a 233-residue protein sequence, read N- to C-terminus: Chalcone--flavanone isomerase (233 aa).

Substrate is bound by residues Thr-47, Asn-113, and Ser-192.

This sequence belongs to the chalcone isomerase family.

It carries out the reaction a chalcone = a flavanone.. It functions in the pathway secondary metabolite biosynthesis; flavonoid biosynthesis. Functionally, catalyzes the intramolecular cyclization of bicyclic chalcones into tricyclic (S)-flavanones. Responsible for the isomerization of 4,2',4',6'-tetrahydroxychalcone (also termed chalcone) into naringenin. The polypeptide is Chalcone--flavanone isomerase (CHI) (Oryza sativa subsp. japonica (Rice)).